Consider the following 235-residue polypeptide: Effector CFEM1 (235 aa).

The signal sequence occupies residues 1–17 (MKFSAPVLAIFLASASA). The CFEM domain occupies 18-114 (QSTAELAAQI…ASASASSSAS (97 aa)). Disulfide bonds link Cys-30/Cys-72, Cys-34/Cys-67, Cys-44/Cys-51, and Cys-53/Cys-88. Asp-48 is a binding site for heme. Thr-211 is lipidated: GPI-anchor amidated threonine. The propeptide at 212-235 (AAGVKEEASFFIPAAVALFAVFAV) is removed in mature form.

Belongs to the RBT5 family.

Its subcellular location is the cell membrane. It is found in the secreted. The protein localises to the host cytoplasm. It localises to the host nucleus. The protein resides in the host cell membrane. Its function is as follows. Appears to function during host infection, and may play a role in suppressing the host immune response. In Marssonina brunnea f. sp. multigermtubi (strain MB_m1) (Marssonina leaf spot fungus), this protein is Effector CFEM1.